A 411-amino-acid polypeptide reads, in one-letter code: Translation initiation factor 2 subunit gamma (411 aa).

In terms of domain architecture, tr-type G spans 9-203 (QAEVNIGMVG…AIQDFIPTPK (195 aa)). The tract at residues 18-25 (GHVDHGKT) is G1. Mg(2+) contacts are provided by aspartate 21, threonine 25, glycine 46, and serine 48. 21 to 26 (DHGKTS) provides a ligand contact to GTP. The segment at 46 to 50 (GISIR) is G2. Positions 61, 64, 73, and 76 each coordinate Zn(2+). The tract at residues 90–93 (DSPG) is G3. GTP contacts are provided by residues 146 to 149 (NKID) and 181 to 183 (SAH). The interval 146 to 149 (NKID) is G4. The tract at residues 181-183 (SAH) is G5.

Belongs to the TRAFAC class translation factor GTPase superfamily. Classic translation factor GTPase family. EIF2G subfamily. Heterotrimer composed of an alpha, a beta and a gamma chain. Mg(2+) is required as a cofactor.

It catalyses the reaction GTP + H2O = GDP + phosphate + H(+). EIF-2 functions in the early steps of protein synthesis by forming a ternary complex with GTP and initiator tRNA. The sequence is that of Translation initiation factor 2 subunit gamma from Methanocaldococcus jannaschii (strain ATCC 43067 / DSM 2661 / JAL-1 / JCM 10045 / NBRC 100440) (Methanococcus jannaschii).